Reading from the N-terminus, the 366-residue chain is MLQVNVELKERRYPITIGAGLLGDPNSYSSLKAGDKVMIVSNPTVAAHYLATVTNTLNGLGCSVDSVLIPDGEKYKTLDSLNMIFTALLEKNHNRDTTLIALGGGVIGDVAGYAAASYQRGIRFIQIPTTLLAQVDSSVGGKTAVNHPLGKNMIGAFYQPISVIIDTNTLQTLPKREVSAGLAEVIKYGAIFDIHFFEWLESNIHHLVALKQNELEYCIQRCCQLKADVVARDETEKGDRALLNLGHTFGHAIEAHLGYGNWLHGEAVSVGMLEAAELSRILGDLSAQDVSRLERLLAQAVLPTISPDGMEPSEYLPYMWRDKKVLGGQLRLVLLKSLGKAYVTAQASEQQVLSAIERFTQREFHE.

NAD(+) contacts are provided by residues 71-76 (DGEKYK), 105-109 (GVIGD), 129-130 (TT), lysine 142, lysine 151, and 169-172 (TLQT). Zn(2+)-binding residues include glutamate 184, histidine 247, and histidine 264.

It belongs to the sugar phosphate cyclases superfamily. Dehydroquinate synthase family. Requires Co(2+) as cofactor. It depends on Zn(2+) as a cofactor. NAD(+) is required as a cofactor.

The protein resides in the cytoplasm. The enzyme catalyses 7-phospho-2-dehydro-3-deoxy-D-arabino-heptonate = 3-dehydroquinate + phosphate. The protein operates within metabolic intermediate biosynthesis; chorismate biosynthesis; chorismate from D-erythrose 4-phosphate and phosphoenolpyruvate: step 2/7. In terms of biological role, catalyzes the conversion of 3-deoxy-D-arabino-heptulosonate 7-phosphate (DAHP) to dehydroquinate (DHQ). The polypeptide is 3-dehydroquinate synthase (Actinobacillus pleuropneumoniae serotype 5b (strain L20)).